The primary structure comprises 211 residues: Large ribosomal subunit protein uL4 (211 aa).

Residues 41–53 show a composition bias toward polar residues; sequence QAHSRQGTASTLT. The segment at 41 to 85 is disordered; the sequence is QAHSRQGTASTLTRAEVRGGGRKPYKQKGTGRARQGSIRTPLRPG. Residues 60 to 71 are compositionally biased toward basic residues; sequence GGRKPYKQKGTG.

This sequence belongs to the universal ribosomal protein uL4 family. As to quaternary structure, part of the 50S ribosomal subunit.

Functionally, one of the primary rRNA binding proteins, this protein initially binds near the 5'-end of the 23S rRNA. It is important during the early stages of 50S assembly. It makes multiple contacts with different domains of the 23S rRNA in the assembled 50S subunit and ribosome. Forms part of the polypeptide exit tunnel. This chain is Large ribosomal subunit protein uL4, found in Prochlorococcus marinus (strain SARG / CCMP1375 / SS120).